The primary structure comprises 293 residues: Xyloglucan endotransglucosylase/hydrolase protein 31 (293 aa).

The first 20 residues, 1–20 (MALSLIFLALLVLCPSSGHS), serve as a signal peptide directing secretion. Residues 29–230 (YPSSRVPTSP…YRYQPFVAKY (202 aa)) form the GH16 domain. Glu-114 acts as the Nucleophile in catalysis. The active-site Proton donor is the Glu-118. Xyloglucan-binding positions include Glu-118, 131 to 133 (QTN), 141 to 148 (DRNVIGRE), and 209 to 210 (DW). 2 disulfide bridges follow: Cys-238-Cys-246 and Cys-280-Cys-293. Residue Arg-285 coordinates xyloglucan.

This sequence belongs to the glycosyl hydrolase 16 family. XTH group 3 subfamily. Interacts with XTH17. The formation of an XTH17-XTH31 dimer may be required for XET activity. Contains at least one intrachain disulfide bond essential for its enzymatic activity. Predominantly expressed in root. Weakly expressed in influorescence stems. Expressed in root tips and elongation zones, stems, young leaves, flowers and siliques. Expressed in root, hypocotyl, and etiolated whole seedlings.

Its subcellular location is the secreted. It localises to the cell wall. The protein localises to the extracellular space. It is found in the apoplast. The protein resides in the cell membrane. The catalysed reaction is breaks a beta-(1-&gt;4) bond in the backbone of a xyloglucan and transfers the xyloglucanyl segment on to O-4 of the non-reducing terminal glucose residue of an acceptor, which can be a xyloglucan or an oligosaccharide of xyloglucan.. It catalyses the reaction xyloglucan + H2O = xyloglucan oligosaccharides.. Catalyzes xyloglucan endohydrolysis (XEH) and/or endotransglycosylation (XET). Cleaves and religates xyloglucan polymers, an essential constituent of the primary cell wall, and thereby participates in cell wall construction of growing tissues. Involved in the accumulation of hemicelluloses. Has a high XEH activity and only a slight XET activity in vitro, but the main in planta activity seems to be XET, thus controlling aluminum sensitivity. Acceptor preferences are XXXGol = XXFGol &gt; XXLGol &gt; XLLGol = XLFGol. This is Xyloglucan endotransglucosylase/hydrolase protein 31 from Arabidopsis thaliana (Mouse-ear cress).